The sequence spans 185 residues: UPF0301 protein Shew_1144 (185 aa).

Belongs to the UPF0301 (AlgH) family.

The sequence is that of UPF0301 protein Shew_1144 from Shewanella loihica (strain ATCC BAA-1088 / PV-4).